The following is a 196-amino-acid chain: MQVHNVNLTISAVRPEQYPDAKLPEVALAGRSNVGKSSLINTLINRRNYARTSSQPGKTQTLNFYNIEDLLYFVDVPGYGYAKVSQKEREKWARMIETYFSTRQELKGAISLVDARHEPSELDCQMIEFLHYYNIPVLVVGTKIDKIPKSKRNKSESQIRKKLQLTKNDRLILFSAVDKIGKDEVWNWIESITKVN.

An EngB-type G domain is found at 22–195 (KLPEVALAGR…WNWIESITKV (174 aa)). Residues 30–37 (GRSNVGKS), 57–61 (GKTQT), 75–78 (DVPG), 142–145 (TKID), and 174–176 (FSA) each bind GTP. Mg(2+)-binding residues include Ser37 and Thr59.

Belongs to the TRAFAC class TrmE-Era-EngA-EngB-Septin-like GTPase superfamily. EngB GTPase family. It depends on Mg(2+) as a cofactor.

Its function is as follows. Necessary for normal cell division and for the maintenance of normal septation. This is Probable GTP-binding protein EngB from Ligilactobacillus salivarius (strain UCC118) (Lactobacillus salivarius).